Reading from the N-terminus, the 395-residue chain is Putative transcription factor 079L (395 aa).

This sequence belongs to the IIV-6 282R family.

Functionally, transcription activation. This is Putative transcription factor 079L from Aedes vexans (Inland floodwater mosquito).